Reading from the N-terminus, the 278-residue chain is HTH-type transcriptional activator RhaS (278 aa).

One can recognise an HTH araC/xylS-type domain in the interval 174 to 272 (NLLLAWLEDH…NWSPRDIRQG (99 aa)). 2 DNA-binding regions (H-T-H motif) span residues 191 to 212 (DAVA…KQQT) and 239 to 262 (VTDI…RREF).

As to quaternary structure, binds DNA as a dimer.

Its subcellular location is the cytoplasm. Functionally, activates expression of the rhaBAD and rhaT operons. This Shigella flexneri serotype 5b (strain 8401) protein is HTH-type transcriptional activator RhaS.